The following is a 331-amino-acid chain: uncharacterized protein (331 aa).

43–50 (GANESGKS) provides a ligand contact to ATP.

This is an uncharacterized protein from Methanocaldococcus jannaschii (strain ATCC 43067 / DSM 2661 / JAL-1 / JCM 10045 / NBRC 100440) (Methanococcus jannaschii).